Here is a 256-residue protein sequence, read N- to C-terminus: Uridylate kinase (256 aa).

10-13 is an ATP binding site; that stretch reads KLSG. Position 52 (Gly52) interacts with UMP. Positions 53 and 57 each coordinate ATP. Residues Asp72 and 134 to 141 each bind UMP; that span reads NGQPFLTT. ATP contacts are provided by Tyr168 and Asp171.

Belongs to the UMP kinase family. Homohexamer.

The protein resides in the cytoplasm. It carries out the reaction UMP + ATP = UDP + ADP. It participates in pyrimidine metabolism; CTP biosynthesis via de novo pathway; UDP from UMP (UMPK route): step 1/1. Its activity is regulated as follows. Inhibited by UTP. Catalyzes the reversible phosphorylation of UMP to UDP. In Frankia alni (strain DSM 45986 / CECT 9034 / ACN14a), this protein is Uridylate kinase.